The following is a 355-amino-acid chain: Epoxide hydrolase 2 (355 aa).

Residues 78-323 (VLLMVHGFPE…IRGASHWVQQ (246 aa)) enclose the AB hydrolase-1 domain. The Nucleophile role is filled by Asp152. The Proton donor role is filled by Tyr263. The Proton acceptor role is filled by His319.

Belongs to the AB hydrolase superfamily. Epoxide hydrolase family.

The enzyme catalyses an epoxide + H2O = an ethanediol. It participates in lipid metabolism. Catalyzes the hydrolysis of epoxide-containing fatty acids. Active in vitro against trans-1,3-diphenylpropene oxide (t-DPPO), epoxyeicosatrienoic acids (EETs) including 8,9-EET, 11,12-EET and 14,15-EET and the linoleic acid metabolites 12,13-epoxy-9-octadecenoate (12,13-EpOME) and 9,10-epoxy-12-octadecenoate (9,10-EpOME). This is Epoxide hydrolase 2 from Caenorhabditis elegans.